The sequence spans 382 residues: Caspase-1-B (382 aa).

Positions 1–98 (MTAQLNKVRK…HEHAPSPIQE (98 aa)) are excised as a propeptide. Active-site residues include His216 and Cys270. A propeptide spanning residues 283–292 (DVAPAPLEDD) is cleaved from the precursor.

The protein belongs to the peptidase C14A family. In terms of assembly, heterotetramer that consists of two anti-parallel arranged heterodimers, each one formed by a 20 kDa (Caspase-1 subunit p20) and a 10 kDa (Caspase-1 subunit p10) subunit. As to quaternary structure, heterotetramer that consists of two anti-parallel arranged heterodimers, each one formed by a 20 kDa (Caspase-1 subunit p20) and a 10 kDa (Caspase-1 subunit p10) subunit. Can form a heterodimer with isoform epsilon which then has an inhibitory effect. The two subunits are derived from the precursor sequence by an autocatalytic mechanism.

It localises to the cytoplasm. The protein localises to the cell membrane. The enzyme catalyses Strict requirement for an Asp residue at position P1 and has a preferred cleavage sequence of Tyr-Val-Ala-Asp-|-.. Thiol protease involved in a variety of inflammatory processes by proteolytically cleaving other proteins, such as the precursors of the inflammatory cytokines interleukin-1 beta (IL1B) and interleukin 18 (IL18) as well as the pyroptosis inducer Gasdermin-D (GSDMD), into active mature peptides. Plays a key role in cell immunity as an inflammatory response initiator: once activated through formation of an inflammasome complex, it initiates a pro-inflammatory response through the cleavage of the two inflammatory cytokines IL1B and IL18, releasing the mature cytokines which are involved in a variety of inflammatory processes. Cleaves a tetrapeptide after an Asp residue at position P1. Also initiates pyroptosis, a programmed lytic cell death pathway, through cleavage of GSDMD. This Xenopus laevis (African clawed frog) protein is Caspase-1-B (casp1-b).